Consider the following 253-residue polypeptide: MVSSFTSAPRSGFYYFAQGWKLVSQPGIRRFVILPLLVNILLMGGAFWWLFTQLDVWIPTLMSYVPDWLQWLSYLLWPLAVISVLLVFGYFFSTIANWIAAPFNGLLAEQLEARLTGATPPDTGIFGIMKDVPRIMKREWQKFAWYLPRAIVLLIIYFIPGIGQTVAPVLWFLFSAWMLAIQYCDYPFDNHKVPFKEMRTALRTRKITNMQFGALTSLFTMIPLLNLFIMPVAVCGATAMWVDCYRDKHAMWR.

The next 4 membrane-spanning stretches (helical) occupy residues 31–51 (FVIL…WWLF), 75–95 (LLWP…FSTI), 151–171 (IVLL…PVLW), and 222–242 (IPLL…AMWV).

The protein belongs to the CysZ family.

The protein localises to the cell inner membrane. Functionally, high affinity, high specificity proton-dependent sulfate transporter, which mediates sulfate uptake. Provides the sulfur source for the cysteine synthesis pathway. The chain is Sulfate transporter CysZ from Escherichia coli O139:H28 (strain E24377A / ETEC).